We begin with the raw amino-acid sequence, 292 residues long: Bifunctional protein FolD (292 aa).

Residues 166 to 168, Ser191, and Ile232 each bind NADP(+); that span reads GRS.

The protein belongs to the tetrahydrofolate dehydrogenase/cyclohydrolase family. Homodimer.

It catalyses the reaction (6R)-5,10-methylene-5,6,7,8-tetrahydrofolate + NADP(+) = (6R)-5,10-methenyltetrahydrofolate + NADPH. It carries out the reaction (6R)-5,10-methenyltetrahydrofolate + H2O = (6R)-10-formyltetrahydrofolate + H(+). Its pathway is one-carbon metabolism; tetrahydrofolate interconversion. Catalyzes the oxidation of 5,10-methylenetetrahydrofolate to 5,10-methenyltetrahydrofolate and then the hydrolysis of 5,10-methenyltetrahydrofolate to 10-formyltetrahydrofolate. The chain is Bifunctional protein FolD from Wolbachia pipientis wMel.